A 399-amino-acid polypeptide reads, in one-letter code: Carbamoyl phosphate synthase small chain (399 aa).

The segment at methionine 1–alanine 206 is CPSase. 3 residues coordinate L-glutamine: serine 60, glycine 258, and glycine 260. Residues histidine 210–threonine 398 form the Glutamine amidotransferase type-1 domain. Cysteine 287 acts as the Nucleophile in catalysis. The L-glutamine site is built by leucine 288, glutamine 291, asparagine 329, glycine 331, and phenylalanine 332. Residues histidine 371 and glutamate 373 contribute to the active site.

The protein belongs to the CarA family. As to quaternary structure, composed of two chains; the small (or glutamine) chain promotes the hydrolysis of glutamine to ammonia, which is used by the large (or ammonia) chain to synthesize carbamoyl phosphate. Tetramer of heterodimers (alpha,beta)4.

The enzyme catalyses hydrogencarbonate + L-glutamine + 2 ATP + H2O = carbamoyl phosphate + L-glutamate + 2 ADP + phosphate + 2 H(+). It catalyses the reaction L-glutamine + H2O = L-glutamate + NH4(+). It participates in amino-acid biosynthesis; L-arginine biosynthesis; carbamoyl phosphate from bicarbonate: step 1/1. It functions in the pathway pyrimidine metabolism; UMP biosynthesis via de novo pathway; (S)-dihydroorotate from bicarbonate: step 1/3. Its function is as follows. Small subunit of the glutamine-dependent carbamoyl phosphate synthetase (CPSase). CPSase catalyzes the formation of carbamoyl phosphate from the ammonia moiety of glutamine, carbonate, and phosphate donated by ATP, constituting the first step of 2 biosynthetic pathways, one leading to arginine and/or urea and the other to pyrimidine nucleotides. The small subunit (glutamine amidotransferase) binds and cleaves glutamine to supply the large subunit with the substrate ammonia. The chain is Carbamoyl phosphate synthase small chain from Bartonella henselae (strain ATCC 49882 / DSM 28221 / CCUG 30454 / Houston 1) (Rochalimaea henselae).